We begin with the raw amino-acid sequence, 150 residues long: Ribosome maturation factor RimP (150 aa).

It belongs to the RimP family.

It localises to the cytoplasm. Required for maturation of 30S ribosomal subunits. This chain is Ribosome maturation factor RimP, found in Francisella tularensis subsp. holarctica (strain LVS).